A 154-amino-acid polypeptide reads, in one-letter code: Interleukin-2 (154 aa).

A signal peptide spans 1 to 20; it reads MYKLQFLSCIALTLALVANS. O-linked (GalNAc...) threonine glycosylation occurs at threonine 23. Residues cysteine 78 and cysteine 126 are joined by a disulfide bond. N-linked (GlcNAc...) asparagine glycosylation occurs at asparagine 111.

It belongs to the IL-2 family.

Its subcellular location is the secreted. Its function is as follows. Cytokine produced by activated CD4-positive helper T-cells and to a lesser extend activated CD8-positive T-cells and natural killer (NK) cells that plays pivotal roles in the immune response and tolerance. Binds to a receptor complex composed of either the high-affinity trimeric IL-2R (IL2RA/CD25, IL2RB/CD122 and IL2RG/CD132) or the low-affinity dimeric IL-2R (IL2RB and IL2RG). Interaction with the receptor leads to oligomerization and conformation changes in the IL-2R subunits resulting in downstream signaling starting with phosphorylation of JAK1 and JAK3. In turn, JAK1 and JAK3 phosphorylate the receptor to form a docking site leading to the phosphorylation of several substrates including STAT5. This process leads to activation of several pathways including STAT, phosphoinositide-3-kinase/PI3K and mitogen-activated protein kinase/MAPK pathways. Functions as a T-cell growth factor and can increase NK-cell cytolytic activity as well. Promotes strong proliferation of activated B-cells and subsequently immunoglobulin production. Plays a pivotal role in regulating the adaptive immune system by controlling the survival and proliferation of regulatory T-cells, which are required for the maintenance of immune tolerance. Moreover, participates in the differentiation and homeostasis of effector T-cell subsets, including Th1, Th2, Th17 as well as memory CD8-positive T-cells. This Camelus bactrianus (Bactrian camel) protein is Interleukin-2 (IL2).